We begin with the raw amino-acid sequence, 288 residues long: Protein CREG2 (288 aa).

Positions 1-31 (MSLSGRERPAWPGSRLSWLLCCSALLSPAAG) are cleaved as a signal peptide. The segment at 78 to 100 (AHKEDTHLRPRGSARARPAPAAR) is disordered. A glycan (N-linked (GlcNAc...) asparagine) is linked at asparagine 164.

The protein belongs to the CREG family. In terms of tissue distribution, brain specific.

It is found in the secreted. The protein is Protein CREG2 (Creg2) of Mus musculus (Mouse).